Reading from the N-terminus, the 102-residue chain is Small ribosomal subunit protein uS10 (102 aa).

It belongs to the universal ribosomal protein uS10 family. In terms of assembly, part of the 30S ribosomal subunit.

Its function is as follows. Involved in the binding of tRNA to the ribosomes. In Bartonella henselae (strain ATCC 49882 / DSM 28221 / CCUG 30454 / Houston 1) (Rochalimaea henselae), this protein is Small ribosomal subunit protein uS10.